A 188-amino-acid polypeptide reads, in one-letter code: NAD(P)H-quinone oxidoreductase subunit J (188 aa).

Residues 1-12 show a composition bias toward polar residues; the sequence is MSETPSKQTAAS. A disordered region spans residues 1-23; that stretch reads MSETPSKQTAASDETGAVVAPEP.

The protein belongs to the complex I 30 kDa subunit family. As to quaternary structure, NDH-1 can be composed of about 15 different subunits; different subcomplexes with different compositions have been identified which probably have different functions.

The protein localises to the cellular thylakoid membrane. It carries out the reaction a plastoquinone + NADH + (n+1) H(+)(in) = a plastoquinol + NAD(+) + n H(+)(out). The enzyme catalyses a plastoquinone + NADPH + (n+1) H(+)(in) = a plastoquinol + NADP(+) + n H(+)(out). Functionally, NDH-1 shuttles electrons from an unknown electron donor, via FMN and iron-sulfur (Fe-S) centers, to quinones in the respiratory and/or the photosynthetic chain. The immediate electron acceptor for the enzyme in this species is believed to be plastoquinone. Couples the redox reaction to proton translocation, and thus conserves the redox energy in a proton gradient. Cyanobacterial NDH-1 also plays a role in inorganic carbon-concentration. The chain is NAD(P)H-quinone oxidoreductase subunit J from Synechococcus sp. (strain CC9605).